Consider the following 1044-residue polypeptide: Outer dynein arm-docking complex subunit 2 (1044 aa).

2 stretches are compositionally biased toward basic and acidic residues: residues 317–338 and 379–401; these read IKFS…EVAI and SKDR…EKSR. Disordered stretches follow at residues 317–409 and 423–446; these read IKFS…PGRA and ISDS…ANAD. HEAT repeat units follow at residues 448–485, 487–527, 530–568, 627–665, and 668–706; these read PSEY…AQET, QLAI…NPQI, NIVD…FRRA, AIRK…EENY, and AIKA…DEET. ARM repeat units follow at residues 484 to 523, 525 to 564, 535 to 577, 622 to 661, 663 to 702, 746 to 785, 828 to 867, 871 to 910, 912 to 951, 953 to 992, and 1004 to 1031; these read ETCQ…EISH, PQIR…NVAK, GGLP…RHGG, YANK…ECAS, ENYR…QCAE, KENV…ECCQ, PESM…PCIQ, DAGE…NIAK, QENL…RCCM, GRNR…QLSE, and GAVK…ISNI. 5 HEAT repeats span residues 831 to 870, 874 to 914, 916 to 955, 958 to 996, and 999 to 1037; these read MMII…QNAK, EMVR…DQEN, AVIT…WGRN, AFGE…DADN, and TMHE…LALA.

Component of the outer dynein arm-docking complex along with ODAD1, ODAD3, ODAD4 and CLXN. Interacts with CFAP61. In terms of tissue distribution, expressed in trachea multiciliated cells.

Its subcellular location is the cytoplasm. The protein localises to the cytoskeleton. The protein resides in the cilium axoneme. It is found in the cilium basal body. In terms of biological role, component of the outer dynein arm-docking complex (ODA-DC) that mediates outer dynein arms (ODA) binding onto the doublet microtubule. Involved in mediating assembly of both ODAs and their axonemal docking complex onto ciliary microtubules. This chain is Outer dynein arm-docking complex subunit 2 (ODAD2), found in Bos taurus (Bovine).